The sequence spans 469 residues: Uronate isomerase (469 aa).

Belongs to the metallo-dependent hydrolases superfamily. Uronate isomerase family.

It carries out the reaction D-glucuronate = D-fructuronate. The enzyme catalyses aldehydo-D-galacturonate = keto-D-tagaturonate. It functions in the pathway carbohydrate metabolism; pentose and glucuronate interconversion. In Edwardsiella ictaluri (strain 93-146), this protein is Uronate isomerase.